The following is a 348-amino-acid chain: uncharacterized protein (348 aa).

It belongs to the Mu gp47/PBSX XkdT family.

This is an uncharacterized protein from Bacillus subtilis (strain 168).